Here is a 75-residue protein sequence, read N- to C-terminus: Small ribosomal subunit protein bS18c (75 aa).

It belongs to the bacterial ribosomal protein bS18 family. As to quaternary structure, part of the 30S ribosomal subunit.

It is found in the plastid. It localises to the chloroplast. The chain is Small ribosomal subunit protein bS18c (rps18) from Marchantia polymorpha (Common liverwort).